Here is a 497-residue protein sequence, read N- to C-terminus: Probable cytosol aminopeptidase (497 aa).

Mn(2+) is bound by residues Lys-268 and Asp-273. Lys-280 is an active-site residue. Mn(2+) contacts are provided by Asp-291, Asp-350, and Glu-352. The active site involves Arg-354.

It belongs to the peptidase M17 family. Mn(2+) serves as cofactor.

The protein localises to the cytoplasm. The catalysed reaction is Release of an N-terminal amino acid, Xaa-|-Yaa-, in which Xaa is preferably Leu, but may be other amino acids including Pro although not Arg or Lys, and Yaa may be Pro. Amino acid amides and methyl esters are also readily hydrolyzed, but rates on arylamides are exceedingly low.. It catalyses the reaction Release of an N-terminal amino acid, preferentially leucine, but not glutamic or aspartic acids.. Presumably involved in the processing and regular turnover of intracellular proteins. Catalyzes the removal of unsubstituted N-terminal amino acids from various peptides. This chain is Probable cytosol aminopeptidase, found in Alkalilimnicola ehrlichii (strain ATCC BAA-1101 / DSM 17681 / MLHE-1).